An 89-amino-acid polypeptide reads, in one-letter code: Defensin-like protein 78 (89 aa).

The first 30 residues, 1 to 30 (MANNMVASPYKNTFMMIALVLILLISGSEA), serve as a signal peptide directing secretion. Intrachain disulfides connect Cys-40–Cys-75, Cys-44–Cys-67, Cys-52–Cys-73, and Cys-56–Cys-74.

It belongs to the DEFL family.

The protein resides in the secreted. This Arabidopsis thaliana (Mouse-ear cress) protein is Defensin-like protein 78.